The primary structure comprises 581 residues: FAD-dependent monooxygenase DEP4 (581 aa).

Residue 43-46 coordinates FAD; it reads VWSK. 54-56 is a binding site for NADP(+); sequence FAQ. Position 108 (Val108) interacts with FAD. NADP(+) contacts are provided by residues 183-202, 219-220, and 351-352; these read VGRS…EGKR, AP, and DI. Met470 contacts FAD.

It belongs to the FAD-binding monooxygenase family. Requires FAD as cofactor.

The protein operates within polyketide biosynthesis. In terms of biological role, FAD-dependent monooxygenase; part of the gene cluster that mediates the biosynthesis of depudecin, a highly oxidized eleven-carbon linear polyketide that acts as a histone deacetylase (HDAC) inhibitor and makes a small contribution to pathogenesis. The reducing polyketide synthase DEP5 is the central enzyme in depudecin biosynthesis by yielding the backbone polyketide chain. The monooxygenases DEP2 and DEP4, as well as the uncharacterized protein DEP1, then act as tailoring enzymes to modify the intermediate polyketide chain into depudecin. The chain is FAD-dependent monooxygenase DEP4 from Alternaria brassicicola (Dark leaf spot agent).